The following is a 926-amino-acid chain: BTB/POZ domain-containing protein KCTD19 (926 aa).

In terms of domain architecture, BTB 1 spans 18 to 72; the sequence is NVGGWHFSVPRSKLSQFPDSLLWKEASALTSSESQRLFIDRDGSTFRHVHYYLYT. Serine 270 is subject to Phosphoserine. In terms of domain architecture, BTB 2 spans 398 to 485; sequence IKVYVGSHWY…YHIPSLSEAL (88 aa). The segment at 673–751 is disordered; that stretch reads GSEAASQPST…PAPEQPLPEA (79 aa). The segment covering 730–742 has biased composition (basic and acidic residues); the sequence is DWSKQRTKERESP.

In terms of assembly, identified in a complex with ZNF541, HDAC1 and HSPA2. Identified in a complex with ZNF541 and HDAC1. Identified in a complex with HDAC1, HDAC2, DNTTIP1 and ZNF541.

Its subcellular location is the nucleus. In terms of biological role, transcription regulator which is essential for male fertility and for the completion of meiotic prophase in spermatocytes. Regulates progression of the pachytene stage of meiotic prophase and promotes the transcriptional activation activity ZNF541. Required for the organization of chromosomes during metaphase I. This Homo sapiens (Human) protein is BTB/POZ domain-containing protein KCTD19 (KCTD19).